A 159-amino-acid chain; its full sequence is Ribosomal RNA large subunit methyltransferase H (159 aa).

Residues Gly108 and Phe127–Phe132 contribute to the S-adenosyl-L-methionine site.

It belongs to the RNA methyltransferase RlmH family. As to quaternary structure, homodimer.

The protein localises to the cytoplasm. The enzyme catalyses pseudouridine(1915) in 23S rRNA + S-adenosyl-L-methionine = N(3)-methylpseudouridine(1915) in 23S rRNA + S-adenosyl-L-homocysteine + H(+). Functionally, specifically methylates the pseudouridine at position 1915 (m3Psi1915) in 23S rRNA. The sequence is that of Ribosomal RNA large subunit methyltransferase H from Clostridium perfringens (strain ATCC 13124 / DSM 756 / JCM 1290 / NCIMB 6125 / NCTC 8237 / Type A).